Here is a 394-residue protein sequence, read N- to C-terminus: MDEGTRTVLRKFEHIEHCLKRNVEAHATNGFEDVHFVHMSLPEIDKDEIDLSVKFLGRKFDYPIMITGMTGGTRKGEVAWKINRTLAQAAEELNIPLGVGSQRAMIEKPETWESYYVRDVAPNVFLVGNLGAPQFGRNAKRKYGVKEVLYAIEKIDADAIAIHMNPLQESVQPEGDTTFSGVLEALAEITSSIDYPVIAKETGAGVSKEVAIKLESIGVSAIDISGVGGTSWSGVEYYRAKDELGKRLALRFWDWGIKTAISLAEVRFSTNLPIIASGGMRDGITMAKALAMGASLVGIALPVLKPAAKGDVEGVIKVIKGYVEEIKNAMFLVGARNVEELRKVPIVFTGFVREWLEQRIDLQEFVKKRAKLRFEFWNVGFYSYPYTSSSTHLF.

10–11 (RK) is a binding site for substrate. FMN contacts are provided by residues threonine 67, 68–70 (GMT), serine 101, and asparagine 129. 101-103 (SQR) contacts substrate. A substrate-binding site is contributed by glutamine 168. Glutamate 169 contacts Mg(2+). FMN-binding positions include lysine 200, serine 225, threonine 230, 279–281 (GMR), and 300–301 (AL).

It belongs to the IPP isomerase type 2 family. As to quaternary structure, homooctamer. Dimer of tetramers. FMN is required as a cofactor. The cofactor is NADPH. Mg(2+) serves as cofactor.

Its subcellular location is the cytoplasm. It catalyses the reaction isopentenyl diphosphate = dimethylallyl diphosphate. Involved in the biosynthesis of isoprenoids. Catalyzes the 1,3-allylic rearrangement of the homoallylic substrate isopentenyl (IPP) to its allylic isomer, dimethylallyl diphosphate (DMAPP). This chain is Isopentenyl-diphosphate delta-isomerase, found in Pyrococcus furiosus (strain ATCC 43587 / DSM 3638 / JCM 8422 / Vc1).